Reading from the N-terminus, the 602-residue chain is Glutamyl-tRNA(Gln) amidotransferase subunit B, mitochondrial (602 aa).

It belongs to the GatB/GatE family. GatB subfamily. Subunit of the heterotrimeric GatCAB amidotransferase (AdT) complex, composed of A, B and C subunits.

It is found in the mitochondrion. The catalysed reaction is L-glutamyl-tRNA(Gln) + L-glutamine + ATP + H2O = L-glutaminyl-tRNA(Gln) + L-glutamate + ADP + phosphate + H(+). In terms of biological role, allows the formation of correctly charged Gln-tRNA(Gln) through the transamidation of misacylated Glu-tRNA(Gln) in the mitochondria. The reaction takes place in the presence of glutamine and ATP through an activated gamma-phospho-Glu-tRNA(Gln). This chain is Glutamyl-tRNA(Gln) amidotransferase subunit B, mitochondrial, found in Paracoccidioides lutzii (strain ATCC MYA-826 / Pb01) (Paracoccidioides brasiliensis).